The following is a 122-amino-acid chain: Large ribosomal subunit protein uL18 (122 aa).

The tract at residues 1–20 is disordered; it reads MFKKVSKNANRLSRHQRVRN.

It belongs to the universal ribosomal protein uL18 family. In terms of assembly, part of the 50S ribosomal subunit; part of the 5S rRNA/L5/L18/L25 subcomplex. Contacts the 5S and 23S rRNAs.

This is one of the proteins that bind and probably mediate the attachment of the 5S RNA into the large ribosomal subunit, where it forms part of the central protuberance. In Alkaliphilus oremlandii (strain OhILAs) (Clostridium oremlandii (strain OhILAs)), this protein is Large ribosomal subunit protein uL18.